We begin with the raw amino-acid sequence, 717 residues long: Mitotic spindle assembly checkpoint protein MAD1 (717 aa).

N-acetylmethionine is present on Met1. Ser16 is subject to Phosphoserine. A coiled-coil region spans residues Glu46–Val631. Lys61 bears the N6-acetyllysine; alternate mark. A Glycyl lysine isopeptide (Lys-Gly) (interchain with G-Cter in SUMO2); alternate cross-link involves residue Lys61. Residues Lys79–Arg82 carry the Nuclear localization signal motif. Residues Ser214 and Ser428 each carry the phosphoserine modification. Residues Leu380 to Gln532 are necessary for interaction with NEK2. Residues Thr540–Ser551 are necessary for interaction with MAD2L1.

This sequence belongs to the MAD1 family. As to quaternary structure, homodimer. Dimerizes via its N- and C- terminal regions. Heterodimerizes with MAD2L1 in order to form a tetrameric MAD1L1-MAD2L1 core complex. Interacts with the closed conformation form of MAD2L1 (C-MAD2) and open conformation form of MAD2L1 (O-MAD2). It is unclear whether MAD1L1 dimerization promotes the conversion of closed to open conformation of MAD2L1. Formation of a heterotetrameric core complex containing two molecules each of MAD1L1 and of MAD2L1 promotes binding of another molecule of MAD2L1 to each MAD2L1, resulting in a heterohexamer. Perturbation of the original MAD1L1-MAD2L1 structure by the spindle checkpoint may decrease MAD2L1 affinity for MAD1L1. CDC20 can compete with MAD1L1 for MAD2L1 binding, until the attachment and/or tension dampen the checkpoint signal, preventing further release of MAD2L1 on to CDC20. Also able to interact with the BUB1/BUB3 complex. Interacts with NEK2. Interacts with TTK. Interacts with TPR; the interactions occurs in a microtubule-independent manner. Interacts with IK. Interacts with the viral Tax protein. Interacts with PRAP1. In terms of processing, phosphorylated; by BUB1. Become hyperphosphorylated in late S through M phases or after mitotic spindle damage.

It is found in the nucleus. Its subcellular location is the chromosome. The protein localises to the centromere. It localises to the kinetochore. The protein resides in the nucleus envelope. It is found in the cytoplasm. Its subcellular location is the cytoskeleton. The protein localises to the microtubule organizing center. It localises to the centrosome. The protein resides in the spindle. It is found in the spindle pole. Component of the spindle-assembly checkpoint that prevents the onset of anaphase until all chromosomes are properly aligned at the metaphase plate. Forms a heterotetrameric complex with the closed conformation form of MAD2L1 (C-MAD2) at unattached kinetochores during prometaphase, recruits an open conformation of MAD2L1 (O-MAD2) and promotes the conversion of O-MAD2 to C-MAD2, which ensures mitotic checkpoint signaling. This chain is Mitotic spindle assembly checkpoint protein MAD1 (MAD1L1), found in Cricetulus griseus (Chinese hamster).